Reading from the N-terminus, the 345-residue chain is Phosphoribosylformylglycinamidine cyclo-ligase (345 aa).

The protein belongs to the AIR synthase family.

The protein resides in the cytoplasm. It catalyses the reaction 2-formamido-N(1)-(5-O-phospho-beta-D-ribosyl)acetamidine + ATP = 5-amino-1-(5-phospho-beta-D-ribosyl)imidazole + ADP + phosphate + H(+). Its pathway is purine metabolism; IMP biosynthesis via de novo pathway; 5-amino-1-(5-phospho-D-ribosyl)imidazole from N(2)-formyl-N(1)-(5-phospho-D-ribosyl)glycinamide: step 2/2. The protein is Phosphoribosylformylglycinamidine cyclo-ligase of Histophilus somni (strain 2336) (Haemophilus somnus).